We begin with the raw amino-acid sequence, 615 residues long: Leucine aminopeptidase 2 (615 aa).

A peptide-binding positions include glutamine 139–glutamine 141 and proline 271–glutamate 276. Histidine 300 contacts Zn(2+). Glutamate 301 (proton acceptor) is an active-site residue. The Zn(2+) site is built by histidine 304 and glutamate 323. The Proton donor role is filled by tyrosine 386.

The protein belongs to the peptidase M1 family. The cofactor is Zn(2+).

It localises to the cytoplasm. Its subcellular location is the nucleus. It carries out the reaction an epoxide + H2O = an ethanediol. In terms of biological role, aminopeptidase that preferentially cleaves di- and tripeptides. Also has low epoxide hydrolase activity (in vitro). Can hydrolyze the epoxide leukotriene LTA(4) but it forms preferentially 5,6-dihydroxy-7,9,11,14-eicosatetraenoic acid rather than the cytokine leukotriene B(4) as the product compared to the homologous mammalian enzyme (in vitro). This chain is Leucine aminopeptidase 2, found in Aspergillus oryzae (strain ATCC 42149 / RIB 40) (Yellow koji mold).